The sequence spans 346 residues: tRNA N6-adenosine threonylcarbamoyltransferase (346 aa).

Fe cation is bound by residues histidine 111 and histidine 115. Residues 134 to 138 (LVSGG), aspartate 167, glycine 180, and asparagine 279 each bind substrate. Position 307 (aspartate 307) interacts with Fe cation.

The protein belongs to the KAE1 / TsaD family. The cofactor is Fe(2+).

Its subcellular location is the cytoplasm. The catalysed reaction is L-threonylcarbamoyladenylate + adenosine(37) in tRNA = N(6)-L-threonylcarbamoyladenosine(37) in tRNA + AMP + H(+). In terms of biological role, required for the formation of a threonylcarbamoyl group on adenosine at position 37 (t(6)A37) in tRNAs that read codons beginning with adenine. Is involved in the transfer of the threonylcarbamoyl moiety of threonylcarbamoyl-AMP (TC-AMP) to the N6 group of A37, together with TsaE and TsaB. TsaD likely plays a direct catalytic role in this reaction. The sequence is that of tRNA N6-adenosine threonylcarbamoyltransferase from Burkholderia pseudomallei (strain 1106a).